Reading from the N-terminus, the 499-residue chain is Type-1 glutamine synthetase 1 (499 aa).

Residues 50–146 (PQLKFIRVCW…IFGEFFYLDN (97 aa)) enclose the GS beta-grasp domain. A GS catalytic domain is found at 158–499 (PRNSLQRAID…DQILKLLELF (342 aa)).

It belongs to the glutamine synthetase family.

The enzyme catalyses L-glutamate + NH4(+) + ATP = L-glutamine + ADP + phosphate + H(+). This chain is Type-1 glutamine synthetase 1 (glnA1), found in Dictyostelium discoideum (Social amoeba).